The primary structure comprises 86 residues: Neurotoxin-like protein pMD18-NTL3 (86 aa).

The signal sequence occupies residues 1–21 (MKTLLLTLVVLTIACLDLGYT). Intrachain disulfides connect cysteine 24–cysteine 45, cysteine 38–cysteine 62, cysteine 66–cysteine 78, and cysteine 79–cysteine 84.

The protein belongs to the three-finger toxin family. Short-chain subfamily. Orphan group IX sub-subfamily. In terms of tissue distribution, expressed by the venom gland.

The protein resides in the secreted. The protein is Neurotoxin-like protein pMD18-NTL3 of Bungarus multicinctus (Many-banded krait).